The following is a 339-amino-acid chain: NmrA-like family domain-containing oxidoreductase notA (339 aa).

Residues 13–18 (GATGAQ), 39–43 (RKPDS), 60–61 (DG), 81–83 (TNS), K140, and 164–167 (YMGI) each bind NADP(+).

Belongs to the NmrA-type oxidoreductase family.

In terms of biological role, nmrA-like family domain-containing oxidoreductase; part of the gene cluster that mediates the biosynthesis of notoamide, a fungal indole alkaloid that belongs to a family of natural products containing a characteristic bicyclo[2.2.2]diazaoctane core. The first step of notoamide biosynthesis involves coupling of L-proline and L-tryptophan by the bimodular NRPS notE, to produce cyclo-L-tryptophan-L-proline called brevianamide F. The reverse prenyltransferase notF then acts as a deoxybrevianamide E synthase and converts brevianamide F to deoxybrevianamide E via reverse prenylation at C-2 of the indole ring leading to the bicyclo[2.2.2]diazaoctane core. Deoxybrevianamide E is further hydroxylated at C-6 of the indole ring, likely catalyzed by the cytochrome P450 monooxygenase notG, to yield 6-hydroxy-deoxybrevianamide E. 6-hydroxy-deoxybrevianamide E is a specific substrate of the prenyltransferase notC for normal prenylation at C-7 to produce 6-hydroxy-7-prenyl-deoxybrevianamide, also called notoamide S. As the proposed pivotal branching point in notoamide biosynthesis, notoamide S can be diverted to notoamide E through an oxidative pyran ring closure putatively catalyzed by either notH cytochrome P450 monooxygenase or the notD FAD-linked oxidoreductase. This step would be followed by an indole 2,3-epoxidation-initiated pinacol-like rearrangement catalyzed by the notB FAD-dependent monooxygenase leading to the formation of notoamide C and notoamide D. On the other hand notoamide S is converted to notoamide T by notH (or notD), a bifunctional oxidase that also functions as the intramolecular Diels-Alderase responsible for generation of (+)-notoamide T. To generate antipodal (-)-notoaminide T, notH' (or notD') in Aspergillus versicolor is expected to catalyze a Diels-Alder reaction leading to the opposite stereochemistry. The remaining oxidoreductase notD (or notH) likely catalyzes the oxidative pyran ring formation to yield (+)-stephacidin A. The FAD-dependent monooxygenase notI is highly similar to notB and is predicted to catalyze a similar conversion from (+)-stephacidin A to (-)-notoamide B via the 2,3-epoxidation of (+)-stephacidin A followed by a pinacol-type rearrangement. Finally, it remains unclear which enzyme could be responsible for the final hydroxylation steps leading to notoamide A and sclerotiamide. The chain is NmrA-like family domain-containing oxidoreductase notA from Aspergillus sp. (strain MF297-2).